Reading from the N-terminus, the 99-residue chain is Cytochrome c oxidase subunit 4 isoform 1, mitochondrial (99 aa).

Residues 1–73 (SVVKREDFSL…TFAEMNRGSN (73 aa)) lie on the Mitochondrial matrix side of the membrane. Position 4 is an N6-acetyllysine; alternate (K4). An N6-succinyllysine; alternate modification is found at K4. An N6-acetyllysine modification is found at K28. 2 positions are modified to phosphoserine: S31 and S33. K35 bears the N6-acetyllysine; alternate mark. The residue at position 35 (K35) is an N6-succinyllysine; alternate. Residue K42 is modified to N6-acetyllysine. Residues 74-99 (EWKTVVGTATFFIGFTALIIMWQKRY) traverse the membrane as a helical segment.

It belongs to the cytochrome c oxidase IV family. In terms of assembly, component of the cytochrome c oxidase (complex IV, CIV), a multisubunit enzyme composed of 14 subunits. The complex is composed of a catalytic core of 3 subunits MT-CO1, MT-CO2 and MT-CO3, encoded in the mitochondrial DNA, and 11 supernumerary subunits COX4I, COX5A, COX5B, COX6A, COX6B, COX6C, COX7A, COX7B, COX7C, COX8 and NDUFA4, which are encoded in the nuclear genome. The complex exists as a monomer or a dimer and forms supercomplexes (SCs) in the inner mitochondrial membrane with NADH-ubiquinone oxidoreductase (complex I, CI) and ubiquinol-cytochrome c oxidoreductase (cytochrome b-c1 complex, complex III, CIII), resulting in different assemblies (supercomplex SCI(1)III(2)IV(1) and megacomplex MCI(2)III(2)IV(2)). Interacts with PHB2; the interaction decreases in absence of SPHK2. Interacts with AFG1L. Interacts with ABCB7; this interaction allows the regulation of cellular iron homeostasis and cellular reactive oxygen species (ROS) levels in cardiomyocytes. Interacts with FLVCR2; this interaction occurs in the absence of heme and is disrupted upon heme binding. Interacts with IRGC.

It is found in the mitochondrion inner membrane. Its pathway is energy metabolism; oxidative phosphorylation. In terms of biological role, component of the cytochrome c oxidase, the last enzyme in the mitochondrial electron transport chain which drives oxidative phosphorylation. The respiratory chain contains 3 multisubunit complexes succinate dehydrogenase (complex II, CII), ubiquinol-cytochrome c oxidoreductase (cytochrome b-c1 complex, complex III, CIII) and cytochrome c oxidase (complex IV, CIV), that cooperate to transfer electrons derived from NADH and succinate to molecular oxygen, creating an electrochemical gradient over the inner membrane that drives transmembrane transport and the ATP synthase. Cytochrome c oxidase is the component of the respiratory chain that catalyzes the reduction of oxygen to water. Electrons originating from reduced cytochrome c in the intermembrane space (IMS) are transferred via the dinuclear copper A center (CU(A)) of subunit 2 and heme A of subunit 1 to the active site in subunit 1, a binuclear center (BNC) formed by heme A3 and copper B (CU(B)). The BNC reduces molecular oxygen to 2 water molecules using 4 electrons from cytochrome c in the IMS and 4 protons from the mitochondrial matrix. This Trachypithecus cristatus (Silvered leaf-monkey) protein is Cytochrome c oxidase subunit 4 isoform 1, mitochondrial (COX4I1).